We begin with the raw amino-acid sequence, 163 residues long: Putative pre-16S rRNA nuclease (163 aa).

The protein belongs to the YqgF nuclease family.

It localises to the cytoplasm. Could be a nuclease involved in processing of the 5'-end of pre-16S rRNA. This chain is Putative pre-16S rRNA nuclease, found in Roseobacter denitrificans (strain ATCC 33942 / OCh 114) (Erythrobacter sp. (strain OCh 114)).